A 269-amino-acid polypeptide reads, in one-letter code: tRNA pseudouridine synthase A (269 aa).

The active-site Nucleophile is the aspartate 51. Tyrosine 109 is a substrate binding site.

It belongs to the tRNA pseudouridine synthase TruA family. As to quaternary structure, homodimer.

It carries out the reaction uridine(38/39/40) in tRNA = pseudouridine(38/39/40) in tRNA. Its function is as follows. Formation of pseudouridine at positions 38, 39 and 40 in the anticodon stem and loop of transfer RNAs. The sequence is that of tRNA pseudouridine synthase A from Aeromonas hydrophila subsp. hydrophila (strain ATCC 7966 / DSM 30187 / BCRC 13018 / CCUG 14551 / JCM 1027 / KCTC 2358 / NCIMB 9240 / NCTC 8049).